The sequence spans 345 residues: MLFRSWLPSSMRHRTLSSSPALWASIPCPRSELRLDLVLASGQSFRWKEQSPAHWSGVLADQVWTLTQTEDQLYCTVYRGDDSQVSRPTLEELETLHKYFQLDVSLAQLYSHWASVDSHFQRVAQKFQGVRLLRQDPTECLFSFICSSNNNIARITGMVERLCQAFGPRLIQLDDVTYHGFPNLHALAGPEAETHLRKLGLGYRARYVRASAKAILEEQGGPAWLQQLRVAPYEEAHKALCTLPGVGAKVADCICLMALDKPQAVPVDVHVWQIAHRDYGWHPKTSQAKGPSPLANKELGNFFRNLWGPYAGWAQAVLFSADLRQPSLSREPPAKRKKGSKRPEG.

Residues Asn149, Arg154, and Arg204 each contribute to the DNA site. Lys249 functions as the Schiff-base intermediate with DNA in the catalytic mechanism. The 8-oxoguanine site is built by Pro266 and Asp268. 2 residues coordinate DNA: His270 and Gln287. The 8-oxoguanine site is built by Gln315 and Phe319.

Belongs to the type-1 OGG1 family. As to expression, highest expression in testis.

It is found in the nucleus. Its subcellular location is the nucleoplasm. It localises to the nucleus speckle. The protein resides in the nucleus matrix. The enzyme catalyses 2'-deoxyribonucleotide-(2'-deoxyribose 5'-phosphate)-2'-deoxyribonucleotide-DNA = a 3'-end 2'-deoxyribonucleotide-(2,3-dehydro-2,3-deoxyribose 5'-phosphate)-DNA + a 5'-end 5'-phospho-2'-deoxyribonucleoside-DNA + H(+). In terms of biological role, DNA repair enzyme that incises DNA at 8-oxoG residues. Excises 7,8-dihydro-8-oxoguanine and 2,6-diamino-4-hydroxy-5-N-methylformamidopyrimidine (FAPY) from damaged DNA. Has a beta-lyase activity that nicks DNA 3' to the lesion. The sequence is that of N-glycosylase/DNA lyase (Ogg1) from Mus musculus (Mouse).